The sequence spans 132 residues: Small integral membrane protein 33 (132 aa).

The disordered stretch occupies residues 1–28; that stretch reads MHQAGHYSWPSPAVNSSSEQEPQRQLPE. The N-linked (GlcNAc...) asparagine glycan is linked to Asn15. The helical transmembrane segment at 43–63 threads the bilayer; that stretch reads PVVTVIVAVFVLLAVCIIVAV. The tract at residues 99-132 is disordered; it reads PQDSPEEAPPGPLVPGSCPAPDGPRPSIDEVTCL.

It localises to the membrane. This Homo sapiens (Human) protein is Small integral membrane protein 33.